The primary structure comprises 150 residues: Dual specificity protein phosphatase 23 (150 aa).

Residues 7–150 (NFSWVLPGRL…AVFQFYQRTK (144 aa)) enclose the Tyrosine-protein phosphatase domain. Cys95 serves as the catalytic Phosphocysteine intermediate.

Belongs to the protein-tyrosine phosphatase family. Non-receptor class dual specificity subfamily. Widely expressed. Highly expressed in spleen, prostate, colon, adrenal gland, mammary gland, thyroid and trachea. Expressed at lower level in uterus, small intestine, bladder, bone marrow, brain, spinal cord and stomach.

It localises to the cytoplasm. It is found in the cytosol. The protein resides in the nucleus. The enzyme catalyses O-phospho-L-tyrosyl-[protein] + H2O = L-tyrosyl-[protein] + phosphate. The catalysed reaction is O-phospho-L-seryl-[protein] + H2O = L-seryl-[protein] + phosphate. It catalyses the reaction O-phospho-L-threonyl-[protein] + H2O = L-threonyl-[protein] + phosphate. Protein phosphatase that mediates dephosphorylation of proteins phosphorylated on Tyr and Ser/Thr residues. In vitro, it can dephosphorylate p44-ERK1 (MAPK3) but not p54 SAPK-beta (MAPK10) in vitro. Able to enhance activation of JNK and p38 (MAPK14). This Homo sapiens (Human) protein is Dual specificity protein phosphatase 23 (DUSP23).